We begin with the raw amino-acid sequence, 921 residues long: Probable dipeptidyl-aminopeptidase B (921 aa).

2 disordered regions span residues 1–33 and 45–66; these read MAGHPEENAQLLSTEQESMSRNSSDSVASTAST and VAANGSEKPTMVTPKFPPRGER. The Cytoplasmic portion of the chain corresponds to 1 to 109; sequence MAGHPEENAQ…NKSVDKKLRR (109 aa). Polar residues predominate over residues 10–22; sequence QLLSTEQESMSRN. Residues 23–33 show a composition bias toward low complexity; the sequence is SSDSVASTAST. The helical; Signal-anchor for type II membrane protein transmembrane segment at 110–130 threads the bilayer; the sequence is LIWIIGGVFIGAWVLALFIFL. Over 131–921 the chain is Vacuolar; it reads GKQAYKHSSE…VPLEIDAAKV (791 aa). A disordered region spans residues 138 to 157; that stretch reads SSESPHDPQATSSRGSGKKV. N-linked (GlcNAc...) asparagine glycosylation is present at Asn362. The Charge relay system role is filled by Ser768. An N-linked (GlcNAc...) asparagine glycan is attached at Asn822. Active-site charge relay system residues include Asp845 and His878.

Belongs to the peptidase S9B family.

It localises to the vacuole membrane. It carries out the reaction Release of an N-terminal dipeptide, Xaa-Yaa-|-Zaa-, from a polypeptide, preferentially when Yaa is Pro, provided Zaa is neither Pro nor hydroxyproline.. Functionally, type IV dipeptidyl-peptidase which removes N-terminal dipeptides sequentially from polypeptides having unsubstituted N-termini provided that the penultimate residue is proline. The chain is Probable dipeptidyl-aminopeptidase B (dapB) from Botryotinia fuckeliana (strain B05.10) (Noble rot fungus).